The following is a 60-amino-acid chain: MFQRIGFPGVTNFQVLLALASLIPTPASRDFFRLPLTVGFTGAEIVNIEFECLRQLTPGM.

The protein is Colanic acid capsular biosynthesis activation protein B (rcsB) of Klebsiella aerogenes (Enterobacter aerogenes).